The following is a 298-amino-acid chain: Homoserine kinase (298 aa).

92–102 contributes to the ATP binding site; the sequence is PLARGLGSSAT.

The protein belongs to the GHMP kinase family. Homoserine kinase subfamily.

The protein resides in the cytoplasm. It carries out the reaction L-homoserine + ATP = O-phospho-L-homoserine + ADP + H(+). The protein operates within amino-acid biosynthesis; L-threonine biosynthesis; L-threonine from L-aspartate: step 4/5. Its function is as follows. Catalyzes the ATP-dependent phosphorylation of L-homoserine to L-homoserine phosphate. This chain is Homoserine kinase (thrB), found in Nostoc sp. (strain PCC 7120 / SAG 25.82 / UTEX 2576).